The primary structure comprises 420 residues: UDP-N-acetylglucosamine 1-carboxyvinyltransferase 1 (420 aa).

Position 22-23 (22-23 (KN)) interacts with phosphoenolpyruvate. R91 contacts UDP-N-acetyl-alpha-D-glucosamine. C115 functions as the Proton donor in the catalytic mechanism. C115 carries the 2-(S-cysteinyl)pyruvic acid O-phosphothioketal modification. Residues 120–124 (RPMDL), D303, and V325 contribute to the UDP-N-acetyl-alpha-D-glucosamine site.

Belongs to the EPSP synthase family. MurA subfamily.

The protein resides in the cytoplasm. It carries out the reaction phosphoenolpyruvate + UDP-N-acetyl-alpha-D-glucosamine = UDP-N-acetyl-3-O-(1-carboxyvinyl)-alpha-D-glucosamine + phosphate. It participates in cell wall biogenesis; peptidoglycan biosynthesis. In terms of biological role, cell wall formation. Adds enolpyruvyl to UDP-N-acetylglucosamine. In Carboxydothermus hydrogenoformans (strain ATCC BAA-161 / DSM 6008 / Z-2901), this protein is UDP-N-acetylglucosamine 1-carboxyvinyltransferase 1.